A 350-amino-acid chain; its full sequence is NAD-dependent protein deacetylase sirtuin-2 (350 aa).

Residues 4–14 (LRNLFTQTLGL) carry the Nuclear export signal motif. A Phosphoserine modification is found at Ser16. Positions 20 to 301 (RLLDELTLEG…LALADLLGWK (282 aa)) constitute a Deacetylase sirtuin-type domain. NAD(+)-binding positions include 48 to 52 (AGIST) and 58 to 60 (DFR). Ser63 carries the phosphoserine modification. An NAD(+)-binding site is contributed by 130 to 133 (QNID). The Proton acceptor role is filled by His150. Zn(2+)-binding residues include Cys158 and Cys163. Ser170 is subject to Phosphoserine. Cys184 and Cys187 together coordinate Zn(2+). NAD(+) contacts are provided by residues 225–226 (TS), 249–251 (NKE), and Cys287. The interval 312-350 (ANIDAQSGSQASNPSATVSPRKSPPPAKEAARTKEKEEH) is disordered. Polar residues predominate over residues 315 to 331 (DAQSGSQASNPSATVSP). A phosphoserine mark is found at Ser330 and Ser334. Positions 340–350 (EAARTKEKEEH) are enriched in basic and acidic residues.

This sequence belongs to the sirtuin family. Class I subfamily. Interacts with CDC20, FOXO3 and FZR1. Associates with microtubules in primary cortical mature neurons. Homotrimer. Interacts (via both phosphorylated, unphosphorylated, active or inactive forms) with HDAC6; the interaction is necessary for the complex to interact with alpha-tubulin, suggesting that these proteins belong to a large complex that deacetylates the cytoskeleton. Interacts with FOXO1; the interaction is disrupted upon serum-starvation or oxidative stress, leading to increased level of acetylated FOXO1 and induction of autophagy. Interacts with RELA; the interaction occurs in the cytoplasm and is increased in a TNF-alpha-dependent manner. Interacts with HOXA10; the interaction is direct. Interacts with YWHAB and YWHAG; the interactions occur in a AKT-dependent manner and increase SIRT2-dependent TP53 deacetylation. Interacts with MAPK1/ERK2 and MAPK3/ERK1; the interactions increase SIRT2 stability and deacetylation activity. Interacts (phosphorylated form) with KMT5A isoform 2; the interaction is direct, stimulates KMT5A-mediated methyltransferase activity on histone at 'Lys-20' (H4K20me1) and is increased in a H(2)O(2)-induced oxidative stress-dependent manner. Interacts with G6PD; the interaction is enhanced by H(2)O(2) treatment. Interacts with a G1/S-specific cyclin E-CDK2 complex. Interacts with AURKA, CDK5R1 (p35 form) and CDK5 and HIF1A. Interacts with the tRNA ligase SARS1; recruited to the VEGFA promoter via interaction with SARS1. Interacts with BEX4; negatively regulates alpha-tubulin deacetylation by SIRT2. Zn(2+) serves as cofactor. In terms of processing, phosphorylated at phosphoserine and phosphothreonine. Phosphorylated at Ser-330 by a mitotic kinase CDK1/cyclin B at the G2/M transition; phosphorylation regulates the delay in cell-cycle progression. Phosphorylated at Ser-330 by a mitotic kinase G1/S-specific cyclin E/Cdk2 complex; phosphorylation inactivates SIRT2-mediated alpha-tubulin deacetylation and thereby negatively regulates cell adhesion, cell migration and neurite outgrowth during neuronal differentiation. Phosphorylated by cyclin A/Cdk2 and p35-Cdk5 complexes and to a lesser extent by the cyclin D3/Cdk4 and cyclin B/Cdk1, in vitro. Dephosphorylated at Ser-330 by CDC14A and CDC14B around early anaphase. Post-translationally, acetylated by EP300; acetylation leads both to the decreased of SIRT2-mediated alpha-tubulin deacetylase activity and SIRT2-mediated down-regulation of TP53 transcriptional activity. Ubiquitinated. In terms of tissue distribution, expressed in the cerebellum, cerebral cortex and cervival spinal cord. Expressed in Purkinje cells, oligodendrocytes and Schwann cells (at protein level). Expressed in the central nervous system (CNS).

It is found in the nucleus. It localises to the cytoplasm. Its subcellular location is the perinuclear region. The protein localises to the cytoskeleton. The protein resides in the microtubule organizing center. It is found in the centrosome. It localises to the centriole. Its subcellular location is the spindle. The protein localises to the midbody. The protein resides in the chromosome. It is found in the perikaryon. It localises to the cell projection. Its subcellular location is the growth cone. The protein localises to the myelin membrane. It carries out the reaction N(6)-acetyl-L-lysyl-[protein] + NAD(+) + H2O = 2''-O-acetyl-ADP-D-ribose + nicotinamide + L-lysyl-[protein]. The catalysed reaction is N(6)-tetradecanoyl-L-lysyl-[protein] + NAD(+) + H2O = 2''-O-tetradecanoyl-ADP-D-ribose + nicotinamide + L-lysyl-[protein]. The enzyme catalyses N(6)-hexadecanoyl-L-lysyl-[protein] + NAD(+) + H2O = 2''-O-hexadecanoyl-ADP-D-ribose + nicotinamide + L-lysyl-[protein]. With respect to regulation, inhibited by Sirtinol, A3 and M15 small molecules. Inhibited by nicotinamide. Inhibited by a macrocyclic peptide inhibitor S2iL5. Inhibited by EP300-induced acetylation. Its function is as follows. NAD-dependent protein deacetylase, which deacetylates internal lysines on histone and alpha-tubulin as well as many other proteins such as key transcription factors. Participates in the modulation of multiple and diverse biological processes such as cell cycle control, genomic integrity, microtubule dynamics, cell differentiation, metabolic networks, and autophagy. Plays a major role in the control of cell cycle progression and genomic stability. Functions in the antephase checkpoint preventing precocious mitotic entry in response to microtubule stress agents, and hence allowing proper inheritance of chromosomes. Positively regulates the anaphase promoting complex/cyclosome (APC/C) ubiquitin ligase complex activity by deacetylating CDC20 and FZR1, then allowing progression through mitosis. Associates both with chromatin at transcriptional start sites (TSSs) and enhancers of active genes. Plays a role in cell cycle and chromatin compaction through epigenetic modulation of the regulation of histone H4 'Lys-20' methylation (H4K20me1) during early mitosis. Specifically deacetylates histone H4 at 'Lys-16' (H4K16ac) between the G2/M transition and metaphase enabling H4K20me1 deposition by KMT5A leading to ulterior levels of H4K20me2 and H4K20me3 deposition throughout cell cycle, and mitotic S-phase progression. Deacetylates KMT5A modulating KMT5A chromatin localization during the mitotic stress response. Also deacetylates histone H3 at 'Lys-57' (H3K56ac) during the mitotic G2/M transition. During oocyte meiosis progression, may deacetylate histone H4 at 'Lys-16' (H4K16ac) and alpha-tubulin, regulating spindle assembly and chromosome alignment by influencing microtubule dynamics and kinetochore function. Deacetylates histone H4 at 'Lys-16' (H4K16ac) at the VEGFA promoter and thereby contributes to regulate expression of VEGFA, a key regulator of angiogenesis. Deacetylates alpha-tubulin at 'Lys-40' and hence controls neuronal motility, oligodendroglial cell arbor projection processes and proliferation of non-neuronal cells. Phosphorylation at Ser-368 by a G1/S-specific cyclin E-CDK2 complex inactivates SIRT2-mediated alpha-tubulin deacetylation, negatively regulating cell adhesion, cell migration and neurite outgrowth during neuronal differentiation. Deacetylates PARD3 and participates in the regulation of Schwann cell peripheral myelination formation during early postnatal development and during postinjury remyelination. Involved in several cellular metabolic pathways. Plays a role in the regulation of blood glucose homeostasis by deacetylating and stabilizing phosphoenolpyruvate carboxykinase PCK1 activity in response to low nutrient availability. Acts as a key regulator in the pentose phosphate pathway (PPP) by deacetylating and activating the glucose-6-phosphate G6PD enzyme, and therefore, stimulates the production of cytosolic NADPH to counteract oxidative damage. Maintains energy homeostasis in response to nutrient deprivation as well as energy expenditure by inhibiting adipogenesis and promoting lipolysis. Attenuates adipocyte differentiation by deacetylating and promoting FOXO1 interaction to PPARG and subsequent repression of PPARG-dependent transcriptional activity. Plays a role in the regulation of lysosome-mediated degradation of protein aggregates by autophagy in neuronal cells. Deacetylates FOXO1 in response to oxidative stress or serum deprivation, thereby negatively regulating FOXO1-mediated autophagy. Deacetylates a broad range of transcription factors and co-regulators regulating target gene expression. Deacetylates transcriptional factor FOXO3 stimulating the ubiquitin ligase SCF(SKP2)-mediated FOXO3 ubiquitination and degradation. Deacetylates HIF1A and therefore promotes HIF1A degradation and inhibition of HIF1A transcriptional activity in tumor cells in response to hypoxia. Deacetylates RELA in the cytoplasm inhibiting NF-kappaB-dependent transcription activation upon TNF-alpha stimulation. Inhibits transcriptional activation by deacetylating p53/TP53 and EP300. Also deacetylates EIF5A. Functions as a negative regulator on oxidative stress-tolerance in response to anoxia-reoxygenation conditions. Plays a role as tumor suppressor. In addition to protein deacetylase activity, also has activity toward long-chain fatty acyl groups and mediates protein-lysine demyristoylation and depalmitoylation of target proteins, such as ARF6 and KRAS, thereby regulating their association with membranes. The polypeptide is NAD-dependent protein deacetylase sirtuin-2 (Sirt2) (Rattus norvegicus (Rat)).